The sequence spans 457 residues: MTKKVYVKTFGCQMNEYDSDKMVDVLNAAEGLEKTDSPEDADIILFNTCSVREKAQEKVFSDLGRVRELKEAKPDLLIGVGGCVASQEGASIVSRAPYVDLVFGPQTLHRLPQMIDARRTSGRAQVDITFPEIEKFDHLPPARVEGPTAFVSIMEGCSKYCSYCVVPYTRGDEVSRPLDDVLTEVAGLADQGVREVTLLGQNVNAYRGALTAGSSEVADFATLIEYVADIPGIERIRYTTSHPKEFTQRLIDTYAKVPKLVNHLHLPVQHGSDRILMAMKRGYTVLEYKSVIRKLRAIRPDLSLSTDLIVGFPGETEEDFDKMMALVHDMRYDTSFSFIYSPRPGTPAANLHDDTPRDVKLKRLQLVQATIEENVARISQSMVGKVERILVEGPSRKDPNELAGRTENNRVVNFPAPLAAHPRLIGQMIDVKINHAYPHSLRGELVLVSDDASAATH.

In terms of domain architecture, MTTase N-terminal spans 3 to 120 (KKVYVKTFGC…LPQMIDARRT (118 aa)). Positions 12, 49, 83, 157, 161, and 164 each coordinate [4Fe-4S] cluster. Residues 143 to 377 (RVEGPTAFVS…QATIEENVAR (235 aa)) enclose the Radical SAM core domain. A TRAM domain is found at 380–447 (QSMVGKVERI…PHSLRGELVL (68 aa)).

Belongs to the methylthiotransferase family. MiaB subfamily. Monomer. The cofactor is [4Fe-4S] cluster.

Its subcellular location is the cytoplasm. It carries out the reaction N(6)-dimethylallyladenosine(37) in tRNA + (sulfur carrier)-SH + AH2 + 2 S-adenosyl-L-methionine = 2-methylsulfanyl-N(6)-dimethylallyladenosine(37) in tRNA + (sulfur carrier)-H + 5'-deoxyadenosine + L-methionine + A + S-adenosyl-L-homocysteine + 2 H(+). Functionally, catalyzes the methylthiolation of N6-(dimethylallyl)adenosine (i(6)A), leading to the formation of 2-methylthio-N6-(dimethylallyl)adenosine (ms(2)i(6)A) at position 37 in tRNAs that read codons beginning with uridine. The polypeptide is tRNA-2-methylthio-N(6)-dimethylallyladenosine synthase (Burkholderia multivorans (strain ATCC 17616 / 249)).